Here is a 544-residue protein sequence, read N- to C-terminus: Serine/threonine-protein kinase bur1 (544 aa).

The Protein kinase domain maps to 25 to 326 (FEFLGKLGEG…AIDALKHPYF (302 aa)). ATP is bound by residues 31 to 39 (LGEGTFGEV) and lysine 54. Residue aspartate 155 is the Proton acceptor of the active site. Residues 357-544 (AAMPPAPAGG…ERVDRGPYRR (188 aa)) form a disordered region. Over residues 374-403 (GGWSTNSGSRTGAETRNPRISSAARSQGNQ) the composition is skewed to polar residues. Basic and acidic residues-rich tracts occupy residues 419-438 (RGNE…HRDG), 456-466 (HSDKTGRDRGY), 488-511 (DRNR…DKSH), and 532-544 (NYRE…PYRR).

This sequence belongs to the protein kinase superfamily. CMGC Ser/Thr protein kinase family. CDC2/CDKX subfamily.

The protein resides in the nucleus. It catalyses the reaction L-seryl-[protein] + ATP = O-phospho-L-seryl-[protein] + ADP + H(+). The catalysed reaction is L-threonyl-[protein] + ATP = O-phospho-L-threonyl-[protein] + ADP + H(+). The enzyme catalyses [DNA-directed RNA polymerase] + ATP = phospho-[DNA-directed RNA polymerase] + ADP + H(+). Functionally, serine/threonine-protein kinase involved in transcription regulation. Phosphorylates the UBC2/RAD6 ubiquitin-conjugating enzyme (E2), leading to monoubiquitination of histone H2B and the silencing of telomeric-associated genes. Also required for histone H3 methylation. Necessary for the recovery from pheromone-induced growth arrest in the cell cycle G1 phase. This Emericella nidulans (strain FGSC A4 / ATCC 38163 / CBS 112.46 / NRRL 194 / M139) (Aspergillus nidulans) protein is Serine/threonine-protein kinase bur1 (ptkA).